The primary structure comprises 103 residues: Small ribosomal subunit protein uS10c (103 aa).

This sequence belongs to the universal ribosomal protein uS10 family. As to quaternary structure, part of the 30S ribosomal subunit.

It is found in the plastid. Its subcellular location is the chloroplast. Functionally, involved in the binding of tRNA to the ribosomes. This is Small ribosomal subunit protein uS10c from Trieres chinensis (Marine centric diatom).